Consider the following 204-residue polypeptide: Large ribosomal subunit protein uL13 (204 aa).

Belongs to the universal ribosomal protein uL13 family.

The polypeptide is Large ribosomal subunit protein uL13 (RpL13A) (Spodoptera frugiperda (Fall armyworm)).